The sequence spans 299 residues: Small ribosomal subunit biogenesis GTPase RsgA (299 aa).

Positions 73–232 (CSWLTRPQVA…VADTPGFNRP (160 aa)) constitute a CP-type G domain. GTP-binding positions include 122 to 125 (TKGD) and 174 to 182 (GPSGVGKSS). The Zn(2+) site is built by cysteine 257, cysteine 262, histidine 264, and cysteine 270.

The protein belongs to the TRAFAC class YlqF/YawG GTPase family. RsgA subfamily. Monomer. Associates with 30S ribosomal subunit, binds 16S rRNA. The cofactor is Zn(2+).

Its subcellular location is the cytoplasm. Its function is as follows. One of several proteins that assist in the late maturation steps of the functional core of the 30S ribosomal subunit. Helps release RbfA from mature subunits. May play a role in the assembly of ribosomal proteins into the subunit. Circularly permuted GTPase that catalyzes slow GTP hydrolysis, GTPase activity is stimulated by the 30S ribosomal subunit. The polypeptide is Small ribosomal subunit biogenesis GTPase RsgA (Parasynechococcus marenigrum (strain WH8102)).